Consider the following 429-residue polypeptide: Tyrosine-protein kinase STYK1 (429 aa).

Residues Val30 to Trp50 traverse the membrane as a helical segment. The disordered stretch occupies residues Ser58–Gly83. One can recognise a Protein kinase domain in the interval Leu119–Ala390. ATP-binding positions include Ile125–Leu133 and Lys152. Catalysis depends on Asp256, which acts as the Proton acceptor.

This sequence belongs to the protein kinase superfamily. Tyr protein kinase family. In terms of tissue distribution, highly expressed in colon and small intestine. Weakly or not expressed in spleen, skeletal muscle, liver, kidney, heart and brain. Expressed in transformed kidney cell lines (COS-1 and HEK293T).

The protein localises to the membrane. The enzyme catalyses L-tyrosyl-[protein] + ATP = O-phospho-L-tyrosyl-[protein] + ADP + H(+). Functionally, probable tyrosine protein-kinase, which has strong transforming capabilities on a variety of cell lines including NIH 3T3 fibroblasts and on athymic nude mice. When overexpressed, it can also induce tumor cell invasion as well as metastasis in distant organs. May act by activating both MAP kinase and phosphatidylinositol 3'-kinases (PI3K) pathways. This is Tyrosine-protein kinase STYK1 (Styk1) from Mus musculus (Mouse).